Here is a 502-residue protein sequence, read N- to C-terminus: ATP synthase subunit alpha (502 aa).

169 to 176 lines the ATP pocket; the sequence is GDRQTGKT.

Belongs to the ATPase alpha/beta chains family. In terms of assembly, F-type ATPases have 2 components, CF(1) - the catalytic core - and CF(0) - the membrane proton channel. CF(1) has five subunits: alpha(3), beta(3), gamma(1), delta(1), epsilon(1). CF(0) has three main subunits: a(1), b(2) and c(9-12). The alpha and beta chains form an alternating ring which encloses part of the gamma chain. CF(1) is attached to CF(0) by a central stalk formed by the gamma and epsilon chains, while a peripheral stalk is formed by the delta and b chains.

Its subcellular location is the cell membrane. The catalysed reaction is ATP + H2O + 4 H(+)(in) = ADP + phosphate + 5 H(+)(out). Its function is as follows. Produces ATP from ADP in the presence of a proton gradient across the membrane. The alpha chain is a regulatory subunit. This Bacillus velezensis (strain DSM 23117 / BGSC 10A6 / LMG 26770 / FZB42) (Bacillus amyloliquefaciens subsp. plantarum) protein is ATP synthase subunit alpha.